We begin with the raw amino-acid sequence, 197 residues long: Protein-S-isoprenylcysteine O-methyltransferase B (197 aa).

Transmembrane regions (helical) follow at residues methionine 16–glycine 36, alanine 52–leucine 72, and phenylalanine 81–glycine 101. S-adenosyl-L-methionine-binding positions include histidine 116–valine 119, tyrosine 124, and histidine 129–tyrosine 132. The chain crosses the membrane as a helical span at residues valine 140 to tryptophan 160. Arginine 166 lines the substrate pocket. Glutamate 170 serves as a coordination point for S-adenosyl-L-methionine.

It belongs to the class VI-like SAM-binding methyltransferase superfamily. Isoprenylcysteine carboxyl methyltransferase family. It depends on Zn(2+) as a cofactor. Expressed in flowers, stems, leaves, roots and siliques. Detected in apices and vascular tissues of leaves and roots, in the stigma and in the filaments and anthers of stamen. Not found in petioles or hypocotyls.

Its subcellular location is the endoplasmic reticulum membrane. The catalysed reaction is [protein]-C-terminal S-[(2E,6E)-farnesyl]-L-cysteine + S-adenosyl-L-methionine = [protein]-C-terminal S-[(2E,6E)-farnesyl]-L-cysteine methyl ester + S-adenosyl-L-homocysteine. Inhibited by farnesylthioacetic acid (FTAA) and N-acetyl-S-trans, trans-farnesyl-l-cysteine (AFC). In terms of biological role, catalyzes the post-translational methylation of isoprenylated C-terminal cysteine residues, resulting in the modulation of the function of prenylated proteins. Involved in negative regulation of abscisic acid signaling. Carboxyl methylation is a reversible and potentially regulated step in the post-translational modification of prenylated proteins. This chain is Protein-S-isoprenylcysteine O-methyltransferase B, found in Arabidopsis thaliana (Mouse-ear cress).